We begin with the raw amino-acid sequence, 1434 residues long: Protein patched homolog 1 (1434 aa).

Residues 1 to 13 are compositionally biased toward low complexity; the sequence is MASAGNAAGALGR. The disordered stretch occupies residues 1–34; that stretch reads MASAGNAAGALGRQAGGGRRRRTGGPHRAAPDRD. At 1–86 the chain is on the cytoplasmic side; that stretch reads MASAGNAAGA…GCYIQKNCGK (86 aa). A helical membrane pass occupies residues 87-107; sequence FLVVGLLIFGAFAVGLKAANL. Over 108–422 the chain is Extracellular; sequence ETNVEELWVE…LDDILKSFSD (315 aa). Asn127, Asn298, Asn335, and Asn400 each carry an N-linked (GlcNAc...) asparagine glycan. Residues 423–443 form a helical membrane-spanning segment; sequence VSVIRVASGYLLMLAYACLTM. Residues 424–584 form the SSD domain; it reads SVIRVASGYL…LLIFPAILSM (161 aa). The Cytoplasmic portion of the chain corresponds to 444–458; it reads LRWDCSKSQGAVGLA. Residues 459–479 traverse the membrane as a helical segment; it reads GVLLVALSVAAGLGLCSLIGI. Residues 480–487 lie on the Extracellular side of the membrane; that stretch reads SFNAATTQ. The helical transmembrane segment at 488-508 threads the bilayer; the sequence is VLPFLALGVGVDDVFLLAHAF. The Cytoplasmic portion of the chain corresponds to 509–533; the sequence is SETGQNKRIPFEDRTGECLKRTGAS. A helical membrane pass occupies residues 534-554; the sequence is VALTSISNVTAFFMAALIPIP. The Extracellular portion of the chain corresponds to 555–563; sequence ALRAFSLQA. A helical membrane pass occupies residues 564–584; that stretch reads AVVVVFNFAMVLLIFPAILSM. The Cytoplasmic portion of the chain corresponds to 585–734; that stretch reads DLYRREDRRL…HYAPFLLKPK (150 aa). A helical membrane pass occupies residues 735–755; that stretch reads AKVVVILLFLGLLGVSLYGTT. The Extracellular portion of the chain corresponds to 756–1013; sequence RVRDGLDLTD…WEQYISLRHW (258 aa). Residues Asn861 and Asn986 are each glycosylated (N-linked (GlcNAc...) asparagine). A helical membrane pass occupies residues 1014–1034; that stretch reads LLLSISVVLACTFLVCAVFLL. Topologically, residues 1035 to 1039 are cytoplasmic; sequence NPWTA. Residues 1040-1060 traverse the membrane as a helical segment; it reads GIIVMVLALMTVELFGMMGLI. Over 1061-1069 the chain is Extracellular; that stretch reads GIKLSAVPV. The chain crosses the membrane as a helical span at residues 1070 to 1090; it reads VILIASVGIGVEFTVHVALAF. Residues 1091–1107 are Cytoplasmic-facing; it reads LTAIGDKNHRAMLALEH. Residues 1108 to 1128 traverse the membrane as a helical segment; that stretch reads MFAPVLDGAVSTLLGVLMLAG. Topologically, residues 1129–1140 are extracellular; sequence SEFDFIVRYFFA. A helical membrane pass occupies residues 1141–1161; the sequence is VLAILTVLGVLNGLVLLPVLL. Residues 1162–1434 lie on the Cytoplasmic side of the membrane; that stretch reads SFFGPCPEVS…EERPWGSSSN (273 aa). 3 disordered regions span residues 1175 to 1219, 1257 to 1348, and 1368 to 1396; these read GLNR…TVSG, HPDS…SSVP, and HPPPGPGRNPRGGPCPGYESYPETDHGVF. Phosphothreonine is present on Thr1181. Phosphoserine is present on Ser1183. Positions 1204-1213 are enriched in low complexity; it reads SDSSDSEYSS. Residues 1288 to 1297 are compositionally biased toward basic and acidic residues; it reads PRRDPPREGL. The segment covering 1335-1348 has biased composition (polar residues); that stretch reads PRNPTSTAMGSSVP. A Glycyl lysine isopeptide (Lys-Gly) (interchain with G-Cter in ubiquitin) cross-link involves residue Lys1413.

Belongs to the patched family. As to quaternary structure, interacts with SNX17. Interacts with IHH. Interacts with G-protein coupled receptor GPR37L1. In terms of processing, glycosylation is necessary for SHH binding. Post-translationally, in the absence of Hh ligands, ubiquitination by ITCH at Lys-1413 promotes endocytosis and both proteasomal and lysosomal degradation. As to expression, detected in cerebellar Bergmann glia cells (at protein level). In the developing embryo, first detected within the ventral neural tube and later in the somites and limb buds. Expression in the limb buds is restricted to the posterior ectoderm surrounding the zone of polarizing activity. In the adult, expression is seen in brain, lung, liver, kidney and ocular tissues; lower levels in heart, skeletal muscle, and testis.

The protein resides in the cell membrane. Functionally, acts as a receptor for sonic hedgehog (SHH), indian hedgehog (IHH) and desert hedgehog (DHH). Associates with the smoothened protein (SMO) to transduce the hedgehog's proteins signal. Seems to have a tumor suppressor function, as inactivation of this protein is probably a necessary, if not sufficient step for tumorigenesis. This is Protein patched homolog 1 (Ptch1) from Mus musculus (Mouse).